Consider the following 152-residue polypeptide: Xanthine-guanine phosphoribosyltransferase (152 aa).

Residues 37 to 38 (RG), R69, and 88 to 96 (DDLVDTGGT) each bind 5-phospho-alpha-D-ribose 1-diphosphate. R69 lines the GMP pocket. A Mg(2+)-binding site is contributed by D89. Guanine-binding residues include D92 and I135. 2 residues coordinate xanthine: D92 and I135. Residues 92 to 96 (DTGGT) and 134 to 135 (WI) contribute to the GMP site.

The protein belongs to the purine/pyrimidine phosphoribosyltransferase family. XGPT subfamily. Homotetramer. Mg(2+) is required as a cofactor.

The protein resides in the cell inner membrane. It catalyses the reaction GMP + diphosphate = guanine + 5-phospho-alpha-D-ribose 1-diphosphate. The catalysed reaction is XMP + diphosphate = xanthine + 5-phospho-alpha-D-ribose 1-diphosphate. It carries out the reaction IMP + diphosphate = hypoxanthine + 5-phospho-alpha-D-ribose 1-diphosphate. It participates in purine metabolism; GMP biosynthesis via salvage pathway; GMP from guanine: step 1/1. It functions in the pathway purine metabolism; XMP biosynthesis via salvage pathway; XMP from xanthine: step 1/1. Its function is as follows. Purine salvage pathway enzyme that catalyzes the transfer of the ribosyl-5-phosphate group from 5-phospho-alpha-D-ribose 1-diphosphate (PRPP) to the N9 position of the 6-oxopurines guanine and xanthine to form the corresponding ribonucleotides GMP (guanosine 5'-monophosphate) and XMP (xanthosine 5'-monophosphate), with the release of PPi. To a lesser extent, also acts on hypoxanthine. This Erwinia tasmaniensis (strain DSM 17950 / CFBP 7177 / CIP 109463 / NCPPB 4357 / Et1/99) protein is Xanthine-guanine phosphoribosyltransferase.